We begin with the raw amino-acid sequence, 726 residues long: Kinesin-like protein KIN-10B (726 aa).

Disordered regions lie at residues 1–20 (MEQQ…RVVA), 60–82 (AATA…QQQK), and 402–423 (KNAR…TANR). In terms of domain architecture, Kinesin motor spans 15-359 (GVRVVARICP…LALASRSSQV (345 aa)). The span at 408-423 (FNNSGVKGGQTPTANR) shows a compositional bias: polar residues.

It belongs to the TRAFAC class myosin-kinesin ATPase superfamily. Kinesin family. KIN-10 subfamily.

This Oryza sativa subsp. japonica (Rice) protein is Kinesin-like protein KIN-10B.